Here is a 578-residue protein sequence, read N- to C-terminus: Polypeptide N-acetylgalactosaminyltransferase 4 (578 aa).

The Cytoplasmic portion of the chain corresponds to 1–12 (MAVRWTWAGKSC). Residues 13–35 (LLLALLTLAYILVEFSVSTLYAS) traverse the membrane as a helical; Signal-anchor for type II membrane protein segment. Residues 36 to 578 (PGAGGARELG…DKNQLWRFEK (543 aa)) are Lumenal-facing. 5 cysteine pairs are disulfide-bonded: C124/C357, C348/C421, C457/C477, C503/C518, and C547/C565. The catalytic subdomain A stretch occupies residues 134–243 (LPTTSVIIAF…TGWLEPLLER (110 aa)). Substrate contacts are provided by D175 and R204. Mn(2+)-binding residues include D227 and H229. The interval 303 to 365 (PIRSPTMAGG…PCSHVGHVFP (63 aa)) is catalytic subdomain B. Position 334 (W334) interacts with substrate. H362 serves as a coordination point for Mn(2+). A substrate-binding site is contributed by Y370. Residues 444-577 (WHGAIRSMGI…LDKNQLWRFE (134 aa)) form the Ricin B-type lectin domain. Residue N471 is glycosylated (N-linked (GlcNAc...) asparagine).

Belongs to the glycosyltransferase 2 family. GalNAc-T subfamily. The cofactor is Mn(2+). In terms of tissue distribution, highly expressed in sublingual gland, stomach, colon, small intestine and cervix. Expressed at intermediate levels in kidney, ovary, lung and uterus. Weakly expressed in spleen, liver, heart and brain. Not expressed in submandibular and parotid glands, skeletal muscle and testis.

It is found in the golgi apparatus membrane. It catalyses the reaction L-seryl-[protein] + UDP-N-acetyl-alpha-D-galactosamine = a 3-O-[N-acetyl-alpha-D-galactosaminyl]-L-seryl-[protein] + UDP + H(+). The catalysed reaction is L-threonyl-[protein] + UDP-N-acetyl-alpha-D-galactosamine = a 3-O-[N-acetyl-alpha-D-galactosaminyl]-L-threonyl-[protein] + UDP + H(+). The protein operates within protein modification; protein glycosylation. Functionally, catalyzes the initial reaction in O-linked oligosaccharide biosynthesis, the transfer of an N-acetyl-D-galactosamine residue to a serine or threonine residue on the protein receptor. Has a highest activity toward EA2 peptide substrate and a much lower activity with EPO-T, Muc2, Muc1a, Muc1b. In Mus musculus (Mouse), this protein is Polypeptide N-acetylgalactosaminyltransferase 4 (Galnt4).